The following is a 4911-amino-acid chain: Histone-lysine N-methyltransferase 2C (4911 aa).

The segment at 1–101 (MSSEEDKSVE…EDAEAEVDNS (101 aa)) is disordered. A compositionally biased stretch (pro residues) spans 12–28 (PQPPPPPPEEPGAPAPS). 2 positions are modified to phosphoserine: Ser-28 and Ser-46. Positions 34–46 (KRPRGRPRKDGAS) form a DNA-binding region, a.T hook. Over residues 50-59 (RARKKPRSRG) the composition is skewed to basic residues. Positions 64 to 81 (EDEDSMDGLETTETETIV) are enriched in acidic residues. Ser-89 carries the phosphoserine modification. The stretch at 92–112 (EDAEAEVDNSKQLIPTLQRSV) forms a coiled coil. Ser-113 carries the phosphoserine modification. Residues 164–203 (RNQPSNKKDIDDNSNGTYEKMQNSAPRKQRGQRKERSPQQ) are disordered. Residues 176–189 (NSNGTYEKMQNSAP) are compositionally biased toward polar residues. At Ser-200 the chain carries Phosphoserine. The segment at 227-262 (ELSLVGLPDAIDIQALFDSTGTCWAHHRCVEWSLGV) adopts a C2HC pre-PHD-type 1; degenerate zinc-finger fold. PHD-type zinc fingers lie at residues 283–331 (ERCA…PEHI), 341–391 (DANC…CKVC), 388–438 (CKVC…CRIC), and 464–520 (DNLC…CKHL). The RING-type zinc finger occupies 344-389 (CAVCDSPGDLLDQFFCTTCGQHYHGMCLDIAVTPLKRAGWQCPECK). One can recognise a DHHC domain in the interval 436–489 (RICIECGTRSSSQWHHNCLICDNCYQQQDNLCPFCGKCYHPELQKDMLHCNMCK). Positions 644 to 672 (EDKMEVTENIEVVTHQITVQQEQLQLLEE) form a coiled coil. Residues 721-730 (QGEKEQKENS) are compositionally biased toward basic and acidic residues. Positions 721–742 (QGEKEQKENSELSTGLMDSEMT) are disordered. Lys-758 is subject to N6-acetyllysine. A compositionally biased stretch (low complexity) spans 763 to 791 (SSETESSFSSSADISKADVSSSPTPSSDL). 3 disordered regions span residues 763–798 (SSET…DMLH), 828–864 (PAIT…DISE), and 885–912 (GRGS…RSKL). The segment covering 830–842 (ITKRKFSPGRPRS) has biased composition (basic residues). The segment covering 845–856 (GAWSTHNTVSPP) has biased composition (polar residues). At Ser-854 the chain carries Phosphoserine. 3 PHD-type zinc fingers span residues 957–1010 (QDMC…CTVC), 1007–1057 (CTVC…CVWC), and 1084–1139 (LSSC…CRPY). Positions 1215-1324 (AVLQTPPDIQ…LPCRDDGWSE (110 aa)) are disordered. A compositionally biased stretch (basic and acidic residues) spans 1224–1270 (QSEHSRDGEMDDSREGELMDCDGKSESSPEREAVDDETKGVEGTDGV). A Phosphoserine modification is found at Ser-1301. Positions 1338 to 1366 (TESTEKIKKRYRKRKNKLEETFPAYLQEA) form a coiled coil. The span at 1406–1416 (PSLDPLLSSSS) shows a compositional bias: low complexity. 2 disordered regions span residues 1406 to 1431 (PSLD…DDPL) and 1458 to 1485 (HSDI…PLSE). Over residues 1467–1482 (DPSSLPQPNVNQSSRP) the composition is skewed to polar residues. An N6-acetyllysine modification is found at Lys-1508. 2 disordered regions span residues 1604 to 1630 (FNPM…DTMS) and 1709 to 2448 (VQMS…SPVA). Polar residues-rich tracts occupy residues 1610-1620 (DPNNSWTSSAP) and 1709-1727 (VQMS…SIDP). Basic and acidic residues predominate over residues 1729-1753 (SRIDSELFKDPLKQRESEHEQEWKF). The stretch at 1754–1787 (RQQMRQKSKQQAKIEATQKLEQVKNEQQQQQQQQ) forms a coiled coil. At Lys-1772 the chain carries N6-acetyllysine. A compositionally biased stretch (polar residues) spans 1788-1823 (FGSQHLLVQSGSDTPSSGIQSPLTPQPGNGNMSPAQ). The span at 1851–1860 (QAPPPPPAPS) shows a compositional bias: pro residues. Positions 1861 to 1875 (RIPIQDSLSQAQTSQ) are enriched in low complexity. A compositionally biased stretch (polar residues) spans 1927-1945 (TPLSSVSRPLQMNETTANR). Position 1987 is a phosphoserine (Ser-1987). At Lys-2009 the chain carries N6-acetyllysine. Polar residues-rich tracts occupy residues 2054 to 2065 (QDPYGSVSQASR), 2085 to 2094 (FSHNQSNDPY), 2115 to 2131 (AFSQ…QDPY), and 2144 to 2159 (SYSQ…TDPY). Low complexity predominate over residues 2173 to 2187 (PYSQQPQTPRPSTQT). Polar residues-rich tracts occupy residues 2302-2319 (SPMT…SQTA), 2335-2353 (CASS…SGVS), and 2362-2375 (SGVT…NMAQ). Positions 2377–2389 (DTEKLRQRQKLRE) are enriched in basic and acidic residues. The segment covering 2390-2399 (IILQQQQQKK) has biased composition (low complexity). Residues Arg-2454 and Arg-2571 each carry the asymmetric dimethylarginine modification. Disordered regions lie at residues 2589–2694 (RHGN…SDDP), 2793–2887 (EPKK…RETA), 2925–2954 (EKSD…VSSL), and 2989–3029 (VNPG…SGPQ). 2 stretches are compositionally biased toward polar residues: residues 2629-2645 (PPSQ…SSMV) and 2661-2682 (PLST…TQPS). The segment covering 2793–2811 (EPKKKEQENKTLVLSDKHS) has biased composition (basic and acidic residues). N6-acetyllysine occurs at positions 2802 and 2809. A compositionally biased stretch (polar residues) spans 2814-2832 (KKSTVTNEVKTEVLSPNSK). Ser-2828 carries the phosphoserine modification. N6-acetyllysine is present on Lys-2832. Residues 2833 to 2849 (VESKCETEKNDENKDNV) are compositionally biased toward basic and acidic residues. The span at 2851 to 2860 (TPCSQASAHS) shows a compositional bias: polar residues. Basic and acidic residues predominate over residues 2861–2884 (DLNDGEKTSLHPCDPDLFEKRTNR). Position 2867 is an N6-acetyllysine (Lys-2867). Residues 3011–3029 (TQTGPQTSQSGTSSMSGPQ) are compositionally biased toward low complexity. Coiled coils occupy residues 3054–3081 (LLQD…QRSE), 3173–3272 (NDSQ…QQQQ), and 3391–3433 (FSES…EMEQ). The segment covering 3205–3221 (HRKSKKALSAKQRTAKK) has biased composition (basic residues). Disordered stretches follow at residues 3205–3241 (HRKS…TEQQ), 3353–3409 (PPIA…EQQE), 3527–3583 (PNFS…HSYP), 3596–3919 (IIPE…MANG), and 4024–4053 (VKEE…SRRN). Basic and acidic residues-rich tracts occupy residues 3222 to 3238 (AGRE…KHVT) and 3395 to 3409 (FQER…EQQE). Polar residues-rich tracts occupy residues 3527–3549 (PNFS…QSPV), 3564–3583 (ANSS…HSYP), 3637–3658 (ISET…QADQ), and 3684–3701 (LPNS…TYAN). Residues 3703–3725 (EVDKLSMETPAKTEEIKLEKAET) show a composition bias toward basic and acidic residues. N6-acetyllysine is present on Lys-3714. Ser-3758 bears the Phosphoserine mark. The span at 3803-3812 (DCTKDNKLVE) shows a compositional bias: basic and acidic residues. A compositionally biased stretch (polar residues) spans 3878 to 3892 (MYSSTDTFTHLKQQN). Residues 3897 to 3911 (PPTPPASLPPTPPPM) show a composition bias toward pro residues. A Phosphoserine modification is found at Ser-4034. At Arg-4139 the chain carries Asymmetric dimethylarginine. Phosphoserine is present on Ser-4267. A C2HC pre-PHD-type 2 zinc finger spans residues 4399–4439 (YRKCCFCHEEGDGLTDGPARLLNLDLDLWVHLNCALWSTEV). Residues 4460-4507 (MKCVFCHKTGATSGCHRFRCTNIYHFTCAIKAQCMFFKDKTMLCPMHK) form a PHD-type 8 zinc finger. Positions 4545 to 4605 (DHTFRVGSLI…CRYLCSIEEK (61 aa)) constitute an FYR N-terminal domain. One can recognise an FYR C-terminal domain in the interval 4606–4691 (DGRPVFVIRI…EACENYTFRY (86 aa)). A WDR5 interaction motif (WIN) motif is present at residues 4707–4712 (GCARSE). An SET domain is found at 4771 to 4887 (SNVYLARSRI…KGEELCYDYK (117 aa)). S-adenosyl-L-methionine-binding positions include Tyr-4825 and 4848-4849 (NH). Positions 4851, 4899, 4901, and 4906 each coordinate Zn(2+). The Post-SET domain occupies 4895–4911 (HKIPCHCGAVNCRKWMN).

The protein belongs to the class V-like SAM-binding methyltransferase superfamily. Histone-lysine methyltransferase family. TRX/MLL subfamily. Component of the MLL3 complex (also named ASCOM complex), at least composed of catalytic subunit KMT2C/MLL3, ASH2L, RBBP5, WDR5, NCOA6, DPY30, KDM6A, PAXIP1/PTIP, PAGR1 and alpha- and beta-tubulin. Forms a core complex with the evolutionary conserved subcomplex WRAD composed of WDR5, RBBP5, ASH2L/ASH2 and DPY30 subunits; WRAD differentially stimulates the methyltransferase activity. Interacts (via WIN motif) with WDR5. Highly expressed in testis and ovary, followed by brain and liver. Also expressed in placenta, peripherical blood, fetal thymus, heart, lung and kidney. Within brain, expression was highest in hippocampus, caudate nucleus, and substantia nigra. Not detected in skeletal muscle and fetal liver.

The protein localises to the nucleus. It catalyses the reaction L-lysyl(4)-[histone H3] + S-adenosyl-L-methionine = N(6)-methyl-L-lysyl(4)-[histone H3] + S-adenosyl-L-homocysteine + H(+). Histone methyltransferase that catalyzes methyl group transfer from S-adenosyl-L-methionine to the epsilon-amino group of 'Lys-4' of histone H3 (H3K4). Part of chromatin remodeling machinery predominantly forms H3K4me1 methylation marks at active chromatin sites where transcription and DNA repair take place. Likely plays a redundant role with KMT2D in enriching H3K4me1 mark on primed and active enhancer elements. This chain is Histone-lysine N-methyltransferase 2C (KMT2C), found in Homo sapiens (Human).